A 342-amino-acid chain; its full sequence is Ubiquitin fusion degradation protein 1 homolog (342 aa).

Disordered regions lie at residues 245 to 276 (FGGAGRRLDGKKKPSSSVSLSDGTGVSTSNAA) and 318 to 342 (EKEASKAGQPSNVFRGGNRTLRGAR). Over residues 259-275 (SSSVSLSDGTGVSTSNA) the composition is skewed to polar residues.

It belongs to the UFD1 family. In terms of assembly, forms a complex composed of ubxn-3, ufd-1, npl-4.1 and cdc-48.1; within the complex interacts with cdc-48.1. Interacts with cdc-48.2. Interacts with npl-4.1 and/or npl-4.2.

Its subcellular location is the cytoplasm. The protein resides in the nucleus. Functions at a post-ubiquitination step in the ubiquitin fusion degradation (UFD) pathway. In association with npl-4.1 and/or npl-4.2 and ATPase cdc-48.1 and/or cdc-48.2, involved in the cytoplasmic elimination of misfolded proteins exported from the ER. This pathway, known as ERAD, prevents the activation of the unfolded protein response (UPR) caused by the accumulation of misfolded proteins in the ER. During S phase and in association with npl-4.1 and/or npl-4.2, cdc-48.1 and/or cdc-48.2 and ubxn-3, ensures the degradation of DNA licensing factor cdt-1 after the initiation of DNA replication and thus the disassembly of the DNA replication CMG helicase complex by promoting the dissociation from chromatin of several of its components including cdc-45 and sld-5. Regulates ubxn-3 nuclear localization during S phase. The polypeptide is Ubiquitin fusion degradation protein 1 homolog (ufd-1) (Caenorhabditis elegans).